Reading from the N-terminus, the 324-residue chain is DNA-directed RNA polymerase subunit alpha (324 aa).

Residues 1–228 (MIEFQKPTIR…EHFNLFTDLS (228 aa)) are alpha N-terminal domain (alpha-NTD). Residues 245 to 324 (RNKLLDMTIE…STPKEEEEEK (80 aa)) form an alpha C-terminal domain (alpha-CTD) region.

It belongs to the RNA polymerase alpha chain family. Homodimer. The RNAP catalytic core consists of 2 alpha, 1 beta, 1 beta' and 1 omega subunit. When a sigma factor is associated with the core the holoenzyme is formed, which can initiate transcription.

It catalyses the reaction RNA(n) + a ribonucleoside 5'-triphosphate = RNA(n+1) + diphosphate. Its function is as follows. DNA-dependent RNA polymerase catalyzes the transcription of DNA into RNA using the four ribonucleoside triphosphates as substrates. In Caldicellulosiruptor bescii (strain ATCC BAA-1888 / DSM 6725 / KCTC 15123 / Z-1320) (Anaerocellum thermophilum), this protein is DNA-directed RNA polymerase subunit alpha.